The primary structure comprises 284 residues: Pantothenate synthetase (284 aa).

30 to 37 (MGNLHEGH) is a binding site for ATP. The active-site Proton donor is H37. Q61 provides a ligand contact to (R)-pantoate. Residue Q61 coordinates beta-alanine. 149 to 152 (GEKD) contributes to the ATP binding site. (R)-pantoate is bound at residue Q155. Residues V178 and 186 to 189 (LSSR) each bind ATP.

This sequence belongs to the pantothenate synthetase family. In terms of assembly, homodimer.

The protein resides in the cytoplasm. It carries out the reaction (R)-pantoate + beta-alanine + ATP = (R)-pantothenate + AMP + diphosphate + H(+). It participates in cofactor biosynthesis; (R)-pantothenate biosynthesis; (R)-pantothenate from (R)-pantoate and beta-alanine: step 1/1. Its function is as follows. Catalyzes the condensation of pantoate with beta-alanine in an ATP-dependent reaction via a pantoyl-adenylate intermediate. The polypeptide is Pantothenate synthetase (Yersinia pseudotuberculosis serotype O:1b (strain IP 31758)).